The chain runs to 500 residues: MAKSSRENGPREPAAGGSLSGTRESLAQGPDAATADELSSLGSDSEANGFAERRIDKFGFIVGSQGAEGALEEVPLEVLRQRESKWLDMLNNWDKWMAKKHKKIRLRCQKGIPPSLRGRAWQYLSGGKVKLQQNPGKFDELDMSPGDPKWLDVIERDLHRQFPFHEMFVSRGGHGQQDLFRVLKAYTLYRPEEGYCQAQAPIAAVLLMHMPAEQAFWCLVQVCEKYLPGYYSEKLEAIQLDGEILFSLLQKVSPVAHKHLSRQKIDPLLYMTEWFMCAFARTLPWSSVLRVWDMFFCEGVKIIFRVGLVLLKHALGSPEKLKACQGQYETIEQLRSLSPKIMQEAFLVQEVIELPVTERQIEREHLIQLRRWQETRGELECRSLPRMHGAKAILDAEPGPRPALQPSPSIRLPPDAALLSSKAKPHKQAQKEQKRTKTSAQLDKSPGLSQATVVTAAGDACPPQGVSPKDPVPQDPTPQNLACHHSQESLTSQESEDTYL.

Positions 1–10 are enriched in basic and acidic residues; it reads MAKSSRENGP. The segment at 1-45 is disordered; that stretch reads MAKSSRENGPREPAAGGSLSGTRESLAQGPDAATADELSSLGSDS. 3 positions are modified to phosphoserine: serine 39, serine 40, and serine 45. The region spanning 111-299 is the Rab-GAP TBC domain; the sequence is GIPPSLRGRA…RVWDMFFCEG (189 aa). 2 disordered regions span residues 396–415 and 420–500; these read AEPG…LPPD and SSKA…DTYL. Serine 407 carries the post-translational modification Phosphoserine. The segment covering 438–453 has biased composition (polar residues); sequence TSAQLDKSPGLSQATV. Residue threonine 477 is modified to Phosphothreonine. The binding to the PDZ domain of EBP50 stretch occupies residues 497-500; the sequence is DTYL.

As to quaternary structure, binds to the first PDZ domain of NHERF1 and NHERF2. Expressed in most tissues, except for skeletal muscle.

It is found in the cell projection. The protein localises to the microvillus. In terms of biological role, GTPase-activating protein (GAP) specific for RAB27A and RAB35. Does not show GAP activity for RAB2A, RAB3A and RAB4A. The polypeptide is TBC1 domain family member 10A (Tbc1d10a) (Mus musculus (Mouse)).